Consider the following 643-residue polypeptide: SURP and G-patch domain-containing protein 1 (643 aa).

2 disordered regions span residues alanine 48–glutamate 69 and lysine 97–lysine 119. At threonine 128 the chain carries Phosphothreonine. The SURP motif 1 repeat unit spans residues valine 187–tyrosine 229. Serine 252 carries the phosphoserine modification. The stretch at leucine 262–tyrosine 305 is one SURP motif 2 repeat. Disordered stretches follow at residues lysine 316–lysine 335 and alanine 360–glutamate 393. Residue serine 322 is modified to Phosphoserine. The Nuclear localization signal motif lies at lysine 378–arginine 384. Phosphoserine is present on residues serine 407, serine 409, serine 412, and serine 483. The region spanning valine 560 to proline 607 is the G-patch domain.

Component of the spliceosome.

It localises to the nucleus. In terms of biological role, plays a role in pre-mRNA splicing. The polypeptide is SURP and G-patch domain-containing protein 1 (Sugp1) (Mus musculus (Mouse)).